Here is a 219-residue protein sequence, read N- to C-terminus: Biofilm-associated metzincin protease inhibitor (219 aa).

The helical transmembrane segment at 4 to 24 (TWIYAASAAAIGGALIGGWLL) threads the bilayer. Residues 191 to 204 (DIAARSDPHGDHVD) are compositionally biased toward basic and acidic residues. Residues 191 to 219 (DIAARSDPHGDHVDAPLAELPPMPPPAQG) are disordered. Residues 209 to 219 (ELPPMPPPAQG) show a composition bias toward pro residues.

It is found in the cell membrane. Inhibitor of the metalloendopeptidase Mep72. Forms a protein-protein complex with the protease, which is the product of its coregulated adjacent gene, and probably prevents premature protease activity until the protein has been secreted. This Pseudomonas aeruginosa (strain ATCC 15692 / DSM 22644 / CIP 104116 / JCM 14847 / LMG 12228 / 1C / PRS 101 / PAO1) protein is Biofilm-associated metzincin protease inhibitor.